The chain runs to 220 residues: FMN-dependent NADH:quinone oxidoreductase (220 aa).

FMN contacts are provided by residues S10, 17–19 (SAS), and 136–139 (SRGG). Positions 200–220 (HSEAVTKAKELTERLTADNGR) are disordered.

Belongs to the azoreductase type 1 family. As to quaternary structure, homodimer. The cofactor is FMN.

The catalysed reaction is 2 a quinone + NADH + H(+) = 2 a 1,4-benzosemiquinone + NAD(+). It carries out the reaction N,N-dimethyl-1,4-phenylenediamine + anthranilate + 2 NAD(+) = 2-(4-dimethylaminophenyl)diazenylbenzoate + 2 NADH + 2 H(+). Its function is as follows. Quinone reductase that provides resistance to thiol-specific stress caused by electrophilic quinones. In terms of biological role, also exhibits azoreductase activity. Catalyzes the reductive cleavage of the azo bond in aromatic azo compounds to the corresponding amines. The polypeptide is FMN-dependent NADH:quinone oxidoreductase (Streptomyces coelicolor (strain ATCC BAA-471 / A3(2) / M145)).